An 88-amino-acid chain; its full sequence is Phosphocarrier protein HPr (88 aa).

The region spanning 1-88 (MKKFQAVIKD…KACLEKNKVI (88 aa)) is the HPr domain. The Pros-phosphohistidine intermediate role is filled by H15. S47 is modified (phosphoserine; by HPrK/P).

It belongs to the HPr family.

The protein localises to the cytoplasm. Phosphorylation on Ser-47 inhibits the phosphoryl transfer from enzyme I to HPr. Its function is as follows. General (non sugar-specific) component of the phosphoenolpyruvate-dependent sugar phosphotransferase system (sugar PTS). This major carbohydrate active-transport system catalyzes the phosphorylation of incoming sugar substrates concomitantly with their translocation across the cell membrane. The phosphoryl group from phosphoenolpyruvate (PEP) is transferred to the phosphoryl carrier protein HPr by enzyme I. Phospho-HPr then transfers it to the PTS EIIA domain. Functionally, P-Ser-HPr interacts with the catabolite control protein A (CcpA), forming a complex that binds to DNA at the catabolite response elements cre, operator sites preceding a large number of catabolite-regulated genes. Thus, P-Ser-HPr is a corepressor in carbon catabolite repression (CCR), a mechanism that allows bacteria to coordinate and optimize the utilization of available carbon sources. P-Ser-HPr also plays a role in inducer exclusion, in which it probably interacts with several non-PTS permeases and inhibits their transport activity. This is Phosphocarrier protein HPr (ptsH) from Mycoplasma genitalium (strain ATCC 33530 / DSM 19775 / NCTC 10195 / G37) (Mycoplasmoides genitalium).